Consider the following 41-residue polypeptide: Large ribosomal subunit protein bL36 (41 aa).

Belongs to the bacterial ribosomal protein bL36 family.

The chain is Large ribosomal subunit protein bL36 from Edwardsiella ictaluri (strain 93-146).